We begin with the raw amino-acid sequence, 79 residues long: Short neurotoxin 1/5 (79 aa).

An N-terminal signal peptide occupies residues 1–21 (MKTLLLTLVMVTIMCLDLGYT). Disulfide bonds link Cys-24–Cys-41, Cys-34–Cys-59, Cys-63–Cys-71, and Cys-72–Cys-77.

The protein belongs to the three-finger toxin family. Short-chain subfamily. Type III alpha-neurotoxin sub-subfamily. In terms of tissue distribution, expressed by the venom gland.

It is found in the secreted. Functionally, binds with high affinity to muscle nicotinic acetylcholine receptor (nAChR) and inhibit acetylcholine from binding to the receptor, thereby impairing neuromuscular transmission. Compete with the binding of alpha-bungarotoxin on muscle AChR (from Torpedo) with an IC(50) of 0.31 uM (SNTX1) and 3.1 uM (SNTX5). Is able of exerting muscle paralysis, spasms and increased respiration. The chain is Short neurotoxin 1/5 from Pseudonaja textilis (Eastern brown snake).